The primary structure comprises 216 residues: Cytidylate kinase (216 aa).

7 to 15 is an ATP binding site; the sequence is GPAGTGKST.

Belongs to the cytidylate kinase family. Type 1 subfamily.

The protein localises to the cytoplasm. It carries out the reaction CMP + ATP = CDP + ADP. It catalyses the reaction dCMP + ATP = dCDP + ADP. The chain is Cytidylate kinase from Chlamydia muridarum (strain MoPn / Nigg).